Reading from the N-terminus, the 102-residue chain is Omega-hexatoxin-Hi2a (102 aa).

The first 23 residues, 1-23 (MKFSKLSLTLALILTQALLVVCG), serve as a signal peptide directing secretion. Residues 24–56 (KINEDFMENGLESHALHDEIRKPIDTEKADAER) constitute a propeptide that is removed on maturation. 3 disulfides stabilise this stretch: cysteine 61–cysteine 75, cysteine 68–cysteine 81, and cysteine 74–cysteine 86. The residue at position 98 (leucine 98) is a Leucine amide. Positions 100 to 102 (RAL) are excised as a propeptide.

It belongs to the neurotoxin 15 family. 02 (omega-actx) subfamily. Expressed by the venom gland.

The protein localises to the secreted. Its function is as follows. Potent inhibitor of insect, but not mammalian, voltage-gated calcium channels (Cav). The protein is Omega-hexatoxin-Hi2a of Hadronyche infensa (Fraser island funnel-web spider).